The following is a 704-amino-acid chain: Preterpestacin I synthase tpcA (704 aa).

Residues 1-329 (MEQLSYQSKL…CSACPRQNAW (329 aa)) are terpene cyclase. Asp-96 provides a ligand contact to Mg(2+). Substrate-binding positions include Asp-96, Asn-231, 235–239 (SWERE), and 325–326 (RQ). Residues 96–100 (DDGGE) carry the DDXXD 1 motif. Residues 231–239 (NDYFSWERE) carry the NSE/DTE motif. The segment at 330 to 688 (KDMSSQSLNG…MLRLCLAKLS (359 aa)) is prenyltransferase. Residues 361–380 (KDSSFFGSQPSDDEPSLSEV) form a disordered region. The isopentenyl diphosphate site is built by Lys-406, Arg-409, and His-438. 2 residues coordinate Mg(2+): Asp-445 and Asp-449. The short motif at 445–449 (DDLED) is the DDXXD 2 element. Arg-454 provides a ligand contact to dimethylallyl diphosphate. Arg-455 serves as a coordination point for isopentenyl diphosphate. Dimethylallyl diphosphate is bound by residues Lys-532, Thr-533, Gln-568, Asn-575, Lys-583, and Lys-593.

In the N-terminal section; belongs to the terpene synthase family. This sequence in the C-terminal section; belongs to the FPP/GGPP synthase family. In terms of assembly, hexamer. The cofactor is Mg(2+).

The enzyme catalyses isopentenyl diphosphate + (2E,6E)-farnesyl diphosphate = (2E,6E,10E)-geranylgeranyl diphosphate + diphosphate. It carries out the reaction isopentenyl diphosphate + (2E,6E,10E)-geranylgeranyl diphosphate = (2E,6E,10E,14E)-geranylfarnesyl diphosphate + diphosphate. It participates in secondary metabolite biosynthesis; terpenoid biosynthesis. Functionally, bifunctional terpene synthase; part of the gene cluster that mediates the biosynthesis of terpestacin. The bifunctional terpene synthase tpcA converts isopentenyl diphosphate (IPP) and dimethylallyl diphosphate (DMAPP) into the sesterterpene preterpestacin I. The C-terminal prenyltransferase (PT) domain of tpcA catalyzes formation of GFPP, whereas the N-terminal terpene cyclase (TC) domain catalyzes the cyclization of GFPP into preterpestacin I. The cytochrome P450 monooxygenase tpcB then hydroxylates preterpestacin I to yield 24-hydroxypreterpstacin I (renamed as preterpestacin II) whereas the cytochrome P450 monooxygenase tpcC further hydroxylates preterpestacin II to yield 16,17-dihydroxypreterpestacin II (renamed as preterpestacin III). Finally, the FAD-dependent monooxygenase tpcD converts preterpestacin III into terpestacin. In Cochliobolus heterostrophus (strain C5 / ATCC 48332 / race O) (Southern corn leaf blight fungus), this protein is Preterpestacin I synthase tpcA.